The following is a 616-amino-acid chain: tRNA 5-methylaminomethyl-2-thiouridine biosynthesis bifunctional protein MnmC (616 aa).

The tract at residues 1-232 (MLRTIVPARL…KRHCMSARFA (232 aa)) is tRNA (mnm(5)s(2)U34)-methyltransferase. Residues 249-616 (IGGGVAGAAA…ARFAGNRKTA (368 aa)) are FAD-dependent cmnm(5)s(2)U34 oxidoreductase.

This sequence in the N-terminal section; belongs to the methyltransferase superfamily. tRNA (mnm(5)s(2)U34)-methyltransferase family. In the C-terminal section; belongs to the DAO family. FAD is required as a cofactor.

The protein localises to the cytoplasm. It catalyses the reaction 5-aminomethyl-2-thiouridine(34) in tRNA + S-adenosyl-L-methionine = 5-methylaminomethyl-2-thiouridine(34) in tRNA + S-adenosyl-L-homocysteine + H(+). In terms of biological role, catalyzes the last two steps in the biosynthesis of 5-methylaminomethyl-2-thiouridine (mnm(5)s(2)U) at the wobble position (U34) in tRNA. Catalyzes the FAD-dependent demodification of cmnm(5)s(2)U34 to nm(5)s(2)U34, followed by the transfer of a methyl group from S-adenosyl-L-methionine to nm(5)s(2)U34, to form mnm(5)s(2)U34. The protein is tRNA 5-methylaminomethyl-2-thiouridine biosynthesis bifunctional protein MnmC of Thiobacillus denitrificans (strain ATCC 25259 / T1).